We begin with the raw amino-acid sequence, 154 residues long: Myoglobin (154 aa).

A Globin domain is found at 2–148 (VLTDAEWHLV…FRKDIAAKYK (147 aa)). His65 serves as a coordination point for nitrite. Residue His65 coordinates O2. Thr68 is modified (phosphothreonine). His94 is a heme b binding site.

This sequence belongs to the globin family. Monomeric.

The protein resides in the cytoplasm. Its subcellular location is the sarcoplasm. It catalyses the reaction Fe(III)-heme b-[protein] + nitric oxide + H2O = Fe(II)-heme b-[protein] + nitrite + 2 H(+). The catalysed reaction is H2O2 + AH2 = A + 2 H2O. Functionally, monomeric heme protein which primary function is to store oxygen and facilitate its diffusion within muscle tissues. Reversibly binds oxygen through a pentacoordinated heme iron and enables its timely and efficient release as needed during periods of heightened demand. Depending on the oxidative conditions of tissues and cells, and in addition to its ability to bind oxygen, it also has a nitrite reductase activity whereby it regulates the production of bioactive nitric oxide. Under stress conditions, like hypoxia and anoxia, it also protects cells against reactive oxygen species thanks to its pseudoperoxidase activity. The sequence is that of Myoglobin (MB) from Balaenoptera physalus (Fin whale).